Here is a 362-residue protein sequence, read N- to C-terminus: 3-dehydroquinate synthase (362 aa).

NAD(+)-binding positions include 71 to 76 (DGEQYK), 105 to 109 (GVIGD), 129 to 130 (TT), Lys-142, Lys-151, and 169 to 172 (CLST). Zn(2+)-binding residues include Glu-184, His-247, and His-264.

It belongs to the sugar phosphate cyclases superfamily. Dehydroquinate synthase family. Co(2+) is required as a cofactor. Requires Zn(2+) as cofactor. NAD(+) serves as cofactor.

Its subcellular location is the cytoplasm. It catalyses the reaction 7-phospho-2-dehydro-3-deoxy-D-arabino-heptonate = 3-dehydroquinate + phosphate. It functions in the pathway metabolic intermediate biosynthesis; chorismate biosynthesis; chorismate from D-erythrose 4-phosphate and phosphoenolpyruvate: step 2/7. In terms of biological role, catalyzes the conversion of 3-deoxy-D-arabino-heptulosonate 7-phosphate (DAHP) to dehydroquinate (DHQ). This Vibrio atlanticus (strain LGP32) (Vibrio splendidus (strain Mel32)) protein is 3-dehydroquinate synthase.